Reading from the N-terminus, the 296-residue chain is ATP phosphoribosyltransferase (296 aa).

Belongs to the ATP phosphoribosyltransferase family.

Its subcellular location is the cytoplasm. It carries out the reaction 1-(5-phospho-beta-D-ribosyl)-ATP + diphosphate = 5-phospho-alpha-D-ribose 1-diphosphate + ATP. The protein operates within amino-acid biosynthesis; L-histidine biosynthesis; L-histidine from 5-phospho-alpha-D-ribose 1-diphosphate: step 1/9. Functionally, catalyzes the condensation of ATP and 5-phosphoribose 1-diphosphate to form N'-(5'-phosphoribosyl)-ATP (PR-ATP). Has a crucial role in the pathway because the rate of histidine biosynthesis seems to be controlled primarily by regulation of the enzymatic activity. The protein is ATP phosphoribosyltransferase (HIS1) of Yarrowia lipolytica (strain CLIB 122 / E 150) (Yeast).